We begin with the raw amino-acid sequence, 363 residues long: Hydroxycarboxylic acid receptor 2 (363 aa).

Residues 1-33 (MNRHHLQDHFLEIDKKNCCVFRDDFIVKVLPPV) lie on the Extracellular side of the membrane. Residues 34–54 (LGLEFIFGLLGNGLALWIFCF) traverse the membrane as a helical segment. Residues 55-63 (HLKSWKSSR) lie on the Cytoplasmic side of the membrane. Residues 64 to 84 (IFLFNLAVADFLLIICLPFLM) form a helical membrane-spanning segment. Topologically, residues 85–102 (DNYVRRWDWKFGDIPCRL) are extracellular. A disulfide bridge links Cys100 with Cys177. The helical transmembrane segment at 103 to 123 (MLFMLAMNRQGSIIFLTVVAV) threads the bilayer. Topologically, residues 124–142 (DRYFRVVHPHHALNKISNR) are cytoplasmic. Residues 143–163 (TAAIISCLLWGITIGLTVHLL) traverse the membrane as a helical segment. The Extracellular portion of the chain corresponds to 164 to 192 (KKKMPIQNGGANLCSSFSICHTFQWHEAM). The chain crosses the membrane as a helical span at residues 193–213 (FLLEFFLPLGIILFCSARIIW). Residues 214–229 (SLRQRQMDRHAKIKRA) lie on the Cytoplasmic side of the membrane. A helical transmembrane segment spans residues 230-250 (ITFIMVVAIVFVICFLPSVVV). The Extracellular portion of the chain corresponds to 251–273 (RIRIFWLLHTSGTQNCEVYRSVD). Residues 274-294 (LAFFITLSFTYMNSMLDPVVY) form a helical membrane-spanning segment. The Cytoplasmic segment spans residues 295 to 363 (YFSSPSFPNF…SPSYLGPTSP (69 aa)). The interval 319 to 363 (GEPDNNRSTSVELTGDPNKTRGAPEALMANSGEPWSPSYLGPTSP) is disordered. Ser328 is modified (phosphoserine).

This sequence belongs to the G-protein coupled receptor 1 family. Expression largely restricted to adipose tissue and spleen. Expressed on mature neutrophils but not on immature neutrophils or eosinophils.

The protein localises to the cell membrane. Its function is as follows. Acts as a high affinity receptor for both nicotinic acid (also known as niacin) and (D)-beta-hydroxybutyrate and mediates increased adiponectin secretion and decreased lipolysis through G(i)-protein-mediated inhibition of adenylyl cyclase. This pharmacological effect requires nicotinic acid doses that are much higher than those provided by a normal diet. Mediates nicotinic acid-induced apoptosis in mature neutrophils. Receptor activation by nicotinic acid results in reduced cAMP levels which may affect activity of cAMP-dependent protein kinase A and phosphorylation of target proteins, leading to neutrophil apoptosis. The rank order of potency for the displacement of nicotinic acid binding is 5-methyl pyrazole-3-carboxylic acid = pyridine-3-acetic acid &gt; acifran &gt; 5-methyl nicotinic acid = acipimox &gt;&gt; nicotinuric acid = nicotinamide. The protein is Hydroxycarboxylic acid receptor 2 (HCAR2) of Homo sapiens (Human).